We begin with the raw amino-acid sequence, 317 residues long: Ribosomal protein L11 methyltransferase (317 aa).

The S-adenosyl-L-methionine site is built by Thr-158, Gly-179, Asp-201, and Asn-244.

It belongs to the methyltransferase superfamily. PrmA family.

It is found in the cytoplasm. It carries out the reaction L-lysyl-[protein] + 3 S-adenosyl-L-methionine = N(6),N(6),N(6)-trimethyl-L-lysyl-[protein] + 3 S-adenosyl-L-homocysteine + 3 H(+). Functionally, methylates ribosomal protein L11. This Streptococcus pyogenes serotype M5 (strain Manfredo) protein is Ribosomal protein L11 methyltransferase.